Here is a 570-residue protein sequence, read N- to C-terminus: MSKQLIPGPVEGPLADNERLKRESDHLRGTIAQDLTDPLTGGFNGDNFQLIRFHGMYQQDDRDIRPERTAQKLEPLHNVMLRARLPGGIITPAQWQVIDKFAEDHSLYGSIRLTTRQTFQFHGVLKRDIKMMHQTLNSTGIDSIATAGDVNRNVLCTSNPVESELHQEAYEWAKKISEHLLPKTRAYVEIWLDGEKLGGDEEPILGSNYLPRKFKTTVVIPPHNDVDIHANDLNFVAISDHGKLVGFNVLVGGGLAMTHGDTSTYPRKASDFGFVPLSHVLEVAAAVVSTQRDWGNRVNRKNAKTKYTLERVGVEAFKAEVESRAGIQFGPVRPYEFTSRGDRFGWVEGIDGKHHLTLFIENGRLLDFPGKPLKTGMLEIAKVHQGDFRLTANQNLIIAGVPAGEKARIEALARQYGLLDDGVSEQRKQSMACVALPTCPLAMAEAERMLPAFVTDIEGLLAKHELANDAIIFRVTGCPNGCGRAMLAEVGLVGKAPGRYNLHLGGNLEGTRIPRLHLENITEPQILAELDALIGRWAKDRNAGECFGDFVIRAGIIAPVIDSARDFYAA.

Cys433, Cys439, Cys478, and Cys482 together coordinate [4Fe-4S] cluster. Position 482 (Cys482) interacts with siroheme.

It belongs to the nitrite and sulfite reductase 4Fe-4S domain family. As to quaternary structure, alpha(8)-beta(8). The alpha component is a flavoprotein, the beta component is a hemoprotein. Siroheme is required as a cofactor. It depends on [4Fe-4S] cluster as a cofactor.

It carries out the reaction hydrogen sulfide + 3 NADP(+) + 3 H2O = sulfite + 3 NADPH + 4 H(+). The protein operates within sulfur metabolism; hydrogen sulfide biosynthesis; hydrogen sulfide from sulfite (NADPH route): step 1/1. Functionally, component of the sulfite reductase complex that catalyzes the 6-electron reduction of sulfite to sulfide. This is one of several activities required for the biosynthesis of L-cysteine from sulfate. This Aeromonas hydrophila subsp. hydrophila (strain ATCC 7966 / DSM 30187 / BCRC 13018 / CCUG 14551 / JCM 1027 / KCTC 2358 / NCIMB 9240 / NCTC 8049) protein is Sulfite reductase [NADPH] hemoprotein beta-component.